Reading from the N-terminus, the 38-residue chain is MNKFLTAAPVVAAIWFTATAGILIEWNRFFPDLLFHPM.

The chain crosses the membrane as a helical span at residues 4-24 (FLTAAPVVAAIWFTATAGILI).

Belongs to the PsaJ family.

The protein resides in the cellular thylakoid membrane. In terms of biological role, may help in the organization of the PsaE and PsaF subunits. In Synechococcus sp. (strain CC9605), this protein is Photosystem I reaction center subunit IX.